Reading from the N-terminus, the 209-residue chain is Uridine kinase (209 aa).

12–19 is an ATP binding site; sequence GGSGSGKT.

It belongs to the uridine kinase family.

It is found in the cytoplasm. The enzyme catalyses uridine + ATP = UMP + ADP + H(+). It carries out the reaction cytidine + ATP = CMP + ADP + H(+). It participates in pyrimidine metabolism; CTP biosynthesis via salvage pathway; CTP from cytidine: step 1/3. The protein operates within pyrimidine metabolism; UMP biosynthesis via salvage pathway; UMP from uridine: step 1/1. This chain is Uridine kinase, found in Listeria monocytogenes serotype 4b (strain CLIP80459).